A 376-amino-acid chain; its full sequence is Natterin-2 (376 aa).

The signal sequence occupies residues 1-18 (MNLSVLLVTLLLLSWTSA). Positions 19-27 (EKDLKVRVA) are excised as a propeptide.

This sequence belongs to the natterin family. Contains 4 disulfide bonds. In terms of tissue distribution, expressed by the venom gland.

The protein resides in the secreted. Inhibited by tissue-kallikrein inhibitor TKI and trasylol. Plasma kallikrein inhibitor PKSI527 and classical inhibitors of serine-, metallo-, thiol- or aspartate-peptidases evokes a minor inhibition of the peptide digestion. Functionally, shows nociceptive, edema-inducing and kininogenase activity with release of kallidin from low molecular weight kininogen. The cleavage occurs at Met-Lys bonds. The chain is Natterin-2 from Thalassophryne nattereri (Copper Joe toadfish).